A 1436-amino-acid chain; its full sequence is MVGGALICKYLPREEQLKLISDLIQNDSLEEVLELIETSPLDITTDSNIETPIFEKITEQVIAYASIDGEAREMFRSSRAEMNKALRTSAQLLCCLPSVWHKFQVWMSYRLNDIISENYKHLFNDNFGKKIVQPFFDSFAEEQNANIKHENLHLDILSLLHYLEVVYLFDECKNGISSKCLDFIIVPLLGCNSEEIADSCSKLMRWHIKYLSKCCNTDSNFDKLIWTFIKQLYAEGSQQAWKQKNSLSFLLRFLLAAELSPELITYIKTDAYWRHIQTELDNDVHEHRKLALSILKLTIQKLSSHGITLQTTFYKCNDLANIEMLGSWKKFTTLYEMIALDTSLNQIQAAKQDIIKIFDNEHLHHSWGLILLSTGLKSSMESVRKYMMTLMFSITNMSAFSSNLPLLTKTLLPAAMSAHYFDVKGVSCPHGEKLSLFVNNLLSQTTEGISDILFEILKLLVEKGTSFDPSRIYLSYGILVFFQNNKQKTINSDHLSLIRKLYDFAAEEEVLETTIQTIYLKFLLYIDPSVSASELLFTLVSHIKLKGGTYKYVEPLFEDYRDLAVSHFDDLQAKENLTTNIGKDTIFDLLASIIFDFKDIDITPDFLIEVAKSKQDIPVYTSKAVTFLTQLLSGEPSNGYTYENATALLSYPNFTISTWKSINVNNLFKSVMEKFSLDKFKFFAEIYQKTYECRFDTIELNFNDLLSLYEMVKKSANQCSRESFKVKDSAYSSYFELLNTFLKTYALNRDSSEGNDDELHILLRLVDENINKDNGNYLGNLAVCKLLYFIIDSYIHCSTSVSDDDIFIVKFIFEKFSFIWECINSERLVLKERDLHLMLIKGLFHPVILYFGSNQYIDTLTSKLEEHAQTIISLSYSRRSLLPLLGSQLRVFMKFYGKLLREDVNYWWLINIIVGVFKQPQMDVNLYKLKPVISSLFDHKLNNYYIKGDELYEKVYGPDEILARVSIIDSILYANDQLKIRLIEKVTEKTNALYAIKRTDGAEALQRLLQWQLLLLSLLTTNEKKLSETSMIRILKSIEDESSPLVRVYKEWFISSKVVDYYKTGNPKFAEDYLFSLLEDHSKPVFVVSAEKICFMVLKDLRNDEKKYGFTQLLDRFICTLVPNAASNKPLVRHFSNSLIISLWPTFKAYLSDHTLRNIIENLYSNAKKTQIFGQYRAGDANIWDLKGDRKLTNMFGGVLKKVTDHDCPYISESVFEKYLQEKDIVPIGTDERSLWLDKRDTNTESVNNANISCDTSPLQTKSGAWETVLDLDNKKSNDVVTRSELIVVSSLVDKPPNLGGICRLCDVLGVGLLTVQDIKVKNHPQFKNVAVTADRWMPMEEVALDEIASFMKEKKKEGYTLIGLEQTDKSVKLDNNFQFPKKSLILLGTEAFGIPGTLLSELDLCLEIQQFGVIRSMNIQTATAVIVHSYTVQHM.

S-adenosyl-L-methionine contacts are provided by residues 1365-1367 (LEQ), G1389, and 1409-1418 (IQQFGVIRSM).

Belongs to the class IV-like SAM-binding methyltransferase superfamily. RNA methyltransferase TrmH family.

It localises to the cytoplasm. The enzyme catalyses guanosine(18) in tRNA + S-adenosyl-L-methionine = 2'-O-methylguanosine(18) in tRNA + S-adenosyl-L-homocysteine + H(+). Its function is as follows. S-adenosyl-L-methionine-dependent 2'-O-ribose methyltransferase that catalyzes the formation of 2'-O-methylguanosine at position 18 (Gm18) in various tRNAs. The sequence is that of tRNA (guanosine(18)-2'-O)-methyltransferase from Saccharomyces cerevisiae (strain ATCC 204508 / S288c) (Baker's yeast).